A 162-amino-acid polypeptide reads, in one-letter code: Large ribosomal subunit protein uL10 (162 aa).

It belongs to the universal ribosomal protein uL10 family. In terms of assembly, part of the ribosomal stalk of the 50S ribosomal subunit. The N-terminus interacts with L11 and the large rRNA to form the base of the stalk. The C-terminus forms an elongated spine to which L12 dimers bind in a sequential fashion forming a multimeric L10(L12)X complex.

Its function is as follows. Forms part of the ribosomal stalk, playing a central role in the interaction of the ribosome with GTP-bound translation factors. In Borrelia recurrentis (strain A1), this protein is Large ribosomal subunit protein uL10.